We begin with the raw amino-acid sequence, 423 residues long: Hemoglobinase (423 aa).

Residues 1-18 form the signal peptide; sequence MFYSIFFIHILRIVLVDC. Residues 19–29 constitute a propeptide that is removed on maturation; the sequence is NEYSEENVDDR. Catalysis depends on residues histidine 145 and cysteine 186. The segment at 286–307 is disordered; that stretch reads RKKASTEHDEPPMKPKDSIPSR. The propeptide occupies 286–423; sequence RKKASTEHDE…INGVIRKVCG (138 aa). A compositionally biased stretch (basic and acidic residues) spans 289–305; that stretch reads ASTEHDEPPMKPKDSIP.

Belongs to the peptidase C13 family. As to expression, gut.

It carries out the reaction Hydrolysis of proteins and small molecule substrates at -Asn-|-Xaa- bonds.. This protease is used by the parasite for degradation of the host globin. This chain is Hemoglobinase (HAEM), found in Schistosoma japonicum (Blood fluke).